Here is a 250-residue protein sequence, read N- to C-terminus: 3-deoxy-manno-octulosonate cytidylyltransferase (250 aa).

This sequence belongs to the KdsB family.

The protein localises to the cytoplasm. It carries out the reaction 3-deoxy-alpha-D-manno-oct-2-ulosonate + CTP = CMP-3-deoxy-beta-D-manno-octulosonate + diphosphate. It participates in nucleotide-sugar biosynthesis; CMP-3-deoxy-D-manno-octulosonate biosynthesis; CMP-3-deoxy-D-manno-octulosonate from 3-deoxy-D-manno-octulosonate and CTP: step 1/1. The protein operates within bacterial outer membrane biogenesis; lipopolysaccharide biosynthesis. Functionally, activates KDO (a required 8-carbon sugar) for incorporation into bacterial lipopolysaccharide in Gram-negative bacteria. The polypeptide is 3-deoxy-manno-octulosonate cytidylyltransferase (Francisella philomiragia subsp. philomiragia (strain ATCC 25017 / CCUG 19701 / FSC 153 / O#319-036)).